A 346-amino-acid chain; its full sequence is Aldose 1-epimerase (346 aa).

Arginine 79 is a binding site for substrate. The active-site Proton donor is histidine 175. Residue aspartate 245 coordinates substrate. Residue glutamate 309 is the Proton acceptor of the active site.

It belongs to the aldose epimerase family.

The protein resides in the cytoplasm. The catalysed reaction is alpha-D-glucose = beta-D-glucose. The protein operates within carbohydrate metabolism; hexose metabolism. In terms of biological role, mutarotase converts alpha-aldose to the beta-anomer. It is active on D-glucose, L-arabinose, D-xylose, D-galactose, maltose and lactose. This Escherichia coli (strain K12) protein is Aldose 1-epimerase (galM).